Consider the following 418-residue polypeptide: Tyrosine--tRNA ligase (418 aa).

Tyr34 provides a ligand contact to L-tyrosine. The short motif at 39–48 (PTADSLHLGH) is the 'HIGH' region element. The L-tyrosine site is built by Tyr169 and Gln173. A 'KMSKS' region motif is present at residues 229 to 233 (KFGKS). Lys232 is an ATP binding site. Residues 352 to 418 (LNLVDMLVTA…GKKKYAVLTY (67 aa)) form the S4 RNA-binding domain.

This sequence belongs to the class-I aminoacyl-tRNA synthetase family. TyrS type 1 subfamily. As to quaternary structure, homodimer.

It is found in the cytoplasm. The catalysed reaction is tRNA(Tyr) + L-tyrosine + ATP = L-tyrosyl-tRNA(Tyr) + AMP + diphosphate + H(+). Functionally, catalyzes the attachment of tyrosine to tRNA(Tyr) in a two-step reaction: tyrosine is first activated by ATP to form Tyr-AMP and then transferred to the acceptor end of tRNA(Tyr). In Streptococcus pyogenes serotype M5 (strain Manfredo), this protein is Tyrosine--tRNA ligase.